Consider the following 540-residue polypeptide: MVNTILVPVAVAIVSVLVGGCAGYSIRKNKWETQAQNAAHDAKHILADAESKAKAVEADLASQKEAMKKAAADAKKEKILEAQEEIHHYRERVDNELNERRQEVSRQENRLLQREDAIDHKDSLLDQKDSQLTQKENQIKKLQAQVLEKENRADQLVTEREKKLYEVAELNQEDAKKIVLDKLSDQLVKERAEMIEESNQLAKAKADHFARKVIVDAIQSSAADTVSEKTVSVVNLPSDDMKGRIIGREGRNIRSFEALTGVDVIIDDTPDVVVLSGFDPIRREIAKRALERLIKDGRIHPARIEEMVDRARKEVNDDIYEAGESALMELGIHKMHPELVKILGRLKYRTSYGQNVLSHSIEVGKLTGVMAAELGLDEKIAVRAGLLHDIGKSIDHEIEGSHVEIGVELARKYHEPDLVVNAIAAHHDDVPKLSFIAELVVAADTISSARPGARSESLENYIRRLEQLETIAKGHIGVKQAYAIQAGREIRVMVEPDKISDARTTILAHDIRNQIEQDMEYPGNIKVTVIREKRAVAIAK.

The helical transmembrane segment at 4-24 (TILVPVAVAIVSVLVGGCAGY) threads the bilayer. The region spanning 230 to 293 (TVSVVNLPSD…EIAKRALERL (64 aa)) is the KH domain. An HD domain is found at 356 to 449 (VLSHSIEVGK…VVAADTISSA (94 aa)).

This sequence belongs to the RNase Y family.

The protein localises to the cell membrane. In terms of biological role, endoribonuclease that initiates mRNA decay. The chain is Ribonuclease Y from Lactobacillus johnsonii (strain CNCM I-12250 / La1 / NCC 533).